A 286-amino-acid polypeptide reads, in one-letter code: uncharacterized protein (286 aa).

The 243-residue stretch at 26 to 268 (PLIILCHGFC…DACHYDIYEG (243 aa)) folds into the AB hydrolase-1 domain.

Belongs to the AB hydrolase superfamily.

This is an uncharacterized protein from Escherichia coli.